Reading from the N-terminus, the 245-residue chain is Ribosomal RNA small subunit methyltransferase G (245 aa).

S-adenosyl-L-methionine contacts are provided by residues Gly90, Leu95, 140–141 (AE), and Arg158. A disordered region spans residues 223 to 245 (VVSARRAKPPHPKSARTGKAGTR). Positions 227-245 (RRAKPPHPKSARTGKAGTR) are enriched in basic residues.

This sequence belongs to the methyltransferase superfamily. RNA methyltransferase RsmG family.

Its subcellular location is the cytoplasm. In terms of biological role, specifically methylates the N7 position of guanine in position 518 of 16S rRNA. In Mycobacterium avium (strain 104), this protein is Ribosomal RNA small subunit methyltransferase G.